The following is a 179-amino-acid chain: Methylated-DNA--protein-cysteine methyltransferase, inducible (179 aa).

Cys-141 serves as the catalytic Nucleophile; methyl group acceptor.

It belongs to the MGMT family.

The catalysed reaction is a 6-O-methyl-2'-deoxyguanosine in DNA + L-cysteinyl-[protein] = S-methyl-L-cysteinyl-[protein] + a 2'-deoxyguanosine in DNA. The enzyme catalyses a 4-O-methyl-thymidine in DNA + L-cysteinyl-[protein] = a thymidine in DNA + S-methyl-L-cysteinyl-[protein]. Functionally, involved in the cellular defense against the biological effects of O6-methylguanine (O6-MeG) and O4-methylthymine (O4-MeT) in DNA. Repairs the methylated nucleobase in DNA by stoichiometrically transferring the methyl group to a cysteine residue in the enzyme. This is a suicide reaction: the enzyme is irreversibly inactivated. The chain is Methylated-DNA--protein-cysteine methyltransferase, inducible (adaB) from Bacillus subtilis (strain 168).